Here is a 304-residue protein sequence, read N- to C-terminus: Protease HtpX homolog (304 aa).

2 consecutive transmembrane segments (helical) span residues 14–34 (VFIVIGFFIFVLMVGAAIGII) and 39–59 (YLNGLILAAVIGAFYILIMVM). His-144 is a binding site for Zn(2+). The active site involves Glu-145. His-148 provides a ligand contact to Zn(2+). Transmembrane regions (helical) follow at residues 161–181 (IALVAVIAILSDLAMRMIFWG) and 202–222 (LIIYIVALVFVVLAPIIATAI). Glu-231 contributes to the Zn(2+) binding site. The segment at 276 to 295 (SPLKSKKDKPGIFDSHPPIS) is disordered.

Belongs to the peptidase M48B family. Zn(2+) serves as cofactor.

It is found in the cell membrane. The polypeptide is Protease HtpX homolog (Listeria welshimeri serovar 6b (strain ATCC 35897 / DSM 20650 / CCUG 15529 / CIP 8149 / NCTC 11857 / SLCC 5334 / V8)).